A 502-amino-acid polypeptide reads, in one-letter code: Phenylalanine--tRNA ligase alpha subunit (502 aa).

L-phenylalanine contacts are provided by residues T339, 382 to 384, and Y422; that span reads QIE. E424 provides a ligand contact to Mg(2+). F448 provides a ligand contact to L-phenylalanine.

It belongs to the class-II aminoacyl-tRNA synthetase family. Phe-tRNA synthetase alpha subunit type 2 subfamily. Tetramer of two alpha and two beta subunits. The cofactor is Mg(2+).

Its subcellular location is the cytoplasm. The enzyme catalyses tRNA(Phe) + L-phenylalanine + ATP = L-phenylalanyl-tRNA(Phe) + AMP + diphosphate + H(+). This is Phenylalanine--tRNA ligase alpha subunit from Halobacterium salinarum (strain ATCC 29341 / DSM 671 / R1).